Here is a 232-residue protein sequence, read N- to C-terminus: Phosphatidylserine decarboxylase proenzyme (232 aa).

S190 (schiff-base intermediate with substrate; via pyruvic acid) is an active-site residue. Residue S190 is modified to Pyruvic acid (Ser); by autocatalysis.

This sequence belongs to the phosphatidylserine decarboxylase family. PSD-A subfamily. As to quaternary structure, heterodimer of a large membrane-associated beta subunit and a small pyruvoyl-containing alpha subunit. It depends on pyruvate as a cofactor. Post-translationally, is synthesized initially as an inactive proenzyme. Formation of the active enzyme involves a self-maturation process in which the active site pyruvoyl group is generated from an internal serine residue via an autocatalytic post-translational modification. Two non-identical subunits are generated from the proenzyme in this reaction, and the pyruvate is formed at the N-terminus of the alpha chain, which is derived from the carboxyl end of the proenzyme. The post-translation cleavage follows an unusual pathway, termed non-hydrolytic serinolysis, in which the side chain hydroxyl group of the serine supplies its oxygen atom to form the C-terminus of the beta chain, while the remainder of the serine residue undergoes an oxidative deamination to produce ammonia and the pyruvoyl prosthetic group on the alpha chain.

The protein resides in the cell membrane. It catalyses the reaction a 1,2-diacyl-sn-glycero-3-phospho-L-serine + H(+) = a 1,2-diacyl-sn-glycero-3-phosphoethanolamine + CO2. Its pathway is phospholipid metabolism; phosphatidylethanolamine biosynthesis; phosphatidylethanolamine from CDP-diacylglycerol: step 2/2. In terms of biological role, catalyzes the formation of phosphatidylethanolamine (PtdEtn) from phosphatidylserine (PtdSer). The chain is Phosphatidylserine decarboxylase proenzyme from Bartonella bacilliformis (strain ATCC 35685 / KC583 / Herrer 020/F12,63).